Consider the following 417-residue polypeptide: NADH-quinone oxidoreductase subunit D (417 aa).

The protein belongs to the complex I 49 kDa subunit family. NDH-1 is composed of 14 different subunits. Subunits NuoB, C, D, E, F, and G constitute the peripheral sector of the complex.

It is found in the cell inner membrane. It catalyses the reaction a quinone + NADH + 5 H(+)(in) = a quinol + NAD(+) + 4 H(+)(out). In terms of biological role, NDH-1 shuttles electrons from NADH, via FMN and iron-sulfur (Fe-S) centers, to quinones in the respiratory chain. The immediate electron acceptor for the enzyme in this species is believed to be ubiquinone. Couples the redox reaction to proton translocation (for every two electrons transferred, four hydrogen ions are translocated across the cytoplasmic membrane), and thus conserves the redox energy in a proton gradient. The protein is NADH-quinone oxidoreductase subunit D of Burkholderia orbicola (strain MC0-3).